We begin with the raw amino-acid sequence, 353 residues long: Protein arginine N-methyltransferase 1 (353 aa).

The SAM-dependent MTase PRMT-type domain occupies 32–353 (KDYYFDSYAH…LSCSTDYRMR (322 aa)). The S-adenosyl-L-methionine site is built by His-45, Arg-54, Gly-78, and Glu-100. An N6-succinyllysine modification is found at Lys-116. Lys-127 is covalently cross-linked (Glycyl lysine isopeptide (Lys-Gly) (interchain with G-Cter in ubiquitin)). Residue Glu-129 participates in S-adenosyl-L-methionine binding. Active-site residues include Glu-144 and Glu-153. 2 positions are modified to N6-acetyllysine: Lys-210 and Lys-215. Ser-286 and Ser-289 each carry phosphoserine.

It belongs to the class I-like SAM-binding methyltransferase superfamily. Protein arginine N-methyltransferase family. Homodimer and heterodimer with PRMT8. Homooctamer; individual homodimers associates to form a homooctamer. Interacts with NFATC2IP. Interacts with ILF3 and SUPT5H. Individual homodimers can associate to form a homohexamer. Interacts with FOXO1; the interaction methylates FOXO1, retaining it in the nucleus and increasing its transcriptional activity. Methylation of FOXO1 is increased with oxidative stress. Interacts with CHTOP; the interaction methylates CHTOP, enabling its interaction with the 5FMC complex. Interacts with BTG1, BTG2 and IFNAR1. Interacts with and probably methylates ATXN2L. Component of the methylosome, a 20S complex containing at least CLNS1A/pICln, PRMT5/SKB1, WDR77/MEP50, PRMT1 and ERH. Interacts with DHX9 (via RGG region). Interacts (via N-terminus) with HABP4. Interacts with MAP3K5/ASK1; the interaction results in MAP3K5 methylation by PRMT1 which inhibits MAP3K5 activation. Interacts with TRIM48; the interaction results in ubiquitination of PRMT1 by TRIM48, leading to PRMT1 proteasomal degradation and activation of MAP3K5. Interacts with GATOR1 complex; this interaction is S-adenosyl-L-methionine (SAM) dependent and is perturbated by SAMTOR in a SAM-sensitive manner. Interacts with GFI1; promoting recognition and binding of MRE11 and TP53BP1 substrates by PRMT1. Polyubiquitinated at Lys-127 by the SCF(FBXL17) complex, leading to its subsequent degradation. Ubiquitination is regulated by acetylation at Lys-210 and Lys-215. Polyubiquitinated by E3 ubiquitin-protein ligase TRIM48, leading to suppression of MAP3K5/ASK1 methylation and subsequent MAP3K5 activation. Post-translationally, acetylation at Lys-210 and Lys-215 regulates ubiquitination by the SCF(FBXL17) complex. Acetylated at Lys-215 by p300/EP300. Deacetylated at Lys-210 and Lys-215 by SIRT1. Ubiquitous.

It localises to the nucleus. It is found in the nucleoplasm. Its subcellular location is the cytoplasm. The protein localises to the cytosol. The protein resides in the lysosome membrane. The enzyme catalyses L-arginyl-[protein] + 2 S-adenosyl-L-methionine = N(omega),N(omega)-dimethyl-L-arginyl-[protein] + 2 S-adenosyl-L-homocysteine + 2 H(+). The catalysed reaction is L-arginyl-[protein] + S-adenosyl-L-methionine = N(omega)-methyl-L-arginyl-[protein] + S-adenosyl-L-homocysteine + H(+). It catalyses the reaction N(omega)-methyl-L-arginyl-[protein] + S-adenosyl-L-methionine = N(omega),N(omega)-dimethyl-L-arginyl-[protein] + S-adenosyl-L-homocysteine + H(+). Arginine methyltransferase that methylates (mono and asymmetric dimethylation) the guanidino nitrogens of arginyl residues present in proteins such as ESR1, histone H2, H3 and H4, FMR1, ILF3, HNRNPA1, HNRNPD, NFATC2IP, SUPT5H, TAF15, EWS, HABP4, SERBP1, RBM15, FOXO1, CHTOP, MAP3K5/ASK1 and MICU1. Constitutes the main enzyme that mediates monomethylation and asymmetric dimethylation of histone H4 'Arg-3' (H4R3me1 and H4R3me2a, respectively), a specific tag for epigenetic transcriptional activation. May be involved in the regulation of TAF15 transcriptional activity, act as an activator of estrogen receptor (ER)-mediated transactivation, play a key role in neurite outgrowth and act as a negative regulator of megakaryocytic differentiation, by modulating p38 MAPK pathway. Methylates RBM15, promoting ubiquitination and degradation of RBM15. Methylates MRE11 and TP53BP1, promoting the DNA damage response. Methylates FOXO1 and retains it in the nucleus increasing its transcriptional activity. Methylates CHTOP and this methylation is critical for its 5-hydroxymethylcytosine (5hmC)-binding activity. Methylates MAP3K5/ASK1 at 'Arg-85' and 'Arg-87' which promotes association of MAP3K5 with thioredoxin and negatively regulates MAP3K5 association with TRAF2, inhibiting MAP3K5 stimulation and MAP3K5-induced activation of JNK. Methylates H4R3 in genes involved in glioblastomagenesis in a CHTOP- and/or TET1-dependent manner. Plays a role in regulating alternative splicing in the heart. Methylates NPRL2 at 'Arg-78' leading to inhibition of its GTPase activator activity and then the GATOR1 complex and consequently inducing timely mTORC1 activation under methionine-sufficient conditions. The polypeptide is Protein arginine N-methyltransferase 1 (Rattus norvegicus (Rat)).